Here is a 1010-residue protein sequence, read N- to C-terminus: MFKKSRHLKNVSNAIKSARVHDVSNGINSKFFDTKKICTYGINGRITVTTFDYTQSLLAVATTAGEIHVYGQKQIEVVFTLKNRPQIKHMRFIKGIYLIAVDEKSNIIVLSVHSKQILTTVFCPNSITCIETDPSLDWMLIGLESGSILIYDVDRNQMSKLKIENFQKSVFLPKERLSPVISIQWNPRDIGTILISYEHITVIYSFIDYKVKQHFFYQLEPYAPGGDLSTNIEKKRTPKVIQSLYHPNSLHILTVHEDNSLVFWDVNSGKLIHARSIFETHVNFPNPALKDCSFTETPAIFKVSWLCQRNPEYTSLLIATKATENPCLPQEITMIDLGGTPMYSVTSFDAMSKYYAKPVQQKLFSLIGKAPLINFLPLPKASPYFGGCHDTNLILLLLEDGELETLIYPAGSFSSKASIFPRSLAWVRPTVTTCIAQSVQKNLWLGMMTIAQSESFLKGGIPATRNIRRHETRSALLTGHSNGSVRIWDASHSEVTDNAVFEVNTAKVLNRATNLAIKNISFASETLELAVSSEVGDVILFKFETNKFYGQLPKSDALQLKFSRFSLDDSKTILVDVSDRGPTNVKQGFIPSTVIHAKKGAVSAIMNSNIGFVAVGFIEGTLIILDRRGPAIIFNENIRVISKAGSSYVSTVHFCVMEYGDDGFSSILMLCGTDIGELMTFKILPATNGRFEVKFTDATKTNNQGKILGINSFAKDTGYSCSATISKMQGLSKGIAIPGFVTISGANDIRLVSPGKSKDTHALFKYPIATSGLSFIPIIDGKGERKLSTIMIVLLINGDIKVLTVPELKEVKNLRCPVPLSAQYVENSSILENGDIVIRTGKFQASLISVLNESATGTNHTADISQHTPIDTLYNPDLKIGYRPQVNSLQWARGTIYCTPYQLDELLGGIERPESKYEESAIARGCISSSSSNAARKLPPGTEDHRYARPVRSSGRSNGYGVLKSVSRAIETRLDTVETTINDYATTMGQTMNDAMEETGRDMMKSAVGF.

WD repeat units lie at residues 47 to 80, 87 to 122, 127 to 163, 182 to 215, 240 to 275, 299 to 364, 372 to 407, 431 to 504, 518 to 595, 602 to 637, 649 to 700, 709 to 763, 768 to 815, and 829 to 852; these read TVTT…VVFT, IKHM…TTVF, ITCI…KLKI, SIQW…KQHF, VIQS…IHAR, AIFK…QKLF, LINF…ETLI, VTTC…FEVN, KNIS…STVI, VSAI…FNEN, VSTV…DATK, GINS…THAL, IATS…KNLR, and SILE…SVLN. The segment at 932–958 is disordered; the sequence is SNAARKLPPGTEDHRYARPVRSSGRSN.

It belongs to the WD repeat L(2)GL family. In terms of assembly, interacts with SEC9.

Its function is as follows. Acts as an allosteric regulator of polarized exocytosis by promoting the targeted fusion of vesicles with the plasma membrane. Involved in maintenance of ion homeostasis in cells exposed to NaCl stress. May be involved in the targeting of the myosin proteins to their intrinsic pathways. Multicopy suppressor of RHO3. May also participate in the maintenance of cell polarity and bud growth. The sequence is that of Lethal(2) giant larvae protein homolog SRO77 (SRO77) from Saccharomyces cerevisiae (strain ATCC 204508 / S288c) (Baker's yeast).